The sequence spans 204 residues: Somatotropin (204 aa).

The first 17 residues, 1–17 (MDKVLFLLFVLSLGVSS), serve as a signal peptide directing secretion. Gln-18 carries the pyrrolidone carboxylic acid modification. Position 36 (His-36) interacts with Zn(2+). Cys-69 and Cys-177 are disulfide-bonded. Residue Glu-186 coordinates Zn(2+). An intrachain disulfide couples Cys-194 to Cys-202.

The protein belongs to the somatotropin/prolactin family.

The protein localises to the secreted. Functionally, growth hormone plays an important role in growth control and is involved in the regulation of several anabolic processes. Implicated as an osmoregulatory substance important for seawater adaptation. This Trichopodus trichopterus (Three spot gourami) protein is Somatotropin (gh).